A 513-amino-acid polypeptide reads, in one-letter code: Transmembrane protein 151B (513 aa).

The disordered stretch occupies residues 1 to 29; that stretch reads MSPAAPVTESSAAEVHREQTDAPREPQRP. Positions 14-28 are enriched in basic and acidic residues; the sequence is EVHREQTDAPREPQR. 3 helical membrane-spanning segments follow: residues 46-66, 93-113, and 274-294; these read CLLLSLLMYCCVIAMTWCQVT, YIYIPVAFLVMLYVVYLVECW, and LPWYASTCSFWLAAAFTLSWP. N-linked (GlcNAc...) asparagine glycosylation is found at N366, N418, and N505.

Belongs to the TMEM151 family.

Its subcellular location is the membrane. This is Transmembrane protein 151B (tmem151b) from Danio rerio (Zebrafish).